We begin with the raw amino-acid sequence, 506 residues long: Nostrin (506 aa).

An F-BAR domain is found at 1-260 (MRDPLTDCSY…AISKVDVEKD (260 aa)). Position 114 is a phosphoserine (serine 114). Coiled coils occupy residues 160–230 (SLTQ…LNQY) and 305–334 (KLGR…ASSS). Residues 292-372 (PMDKERRKSL…SYKLSSVLAD (81 aa)) enclose the REM-1 domain. Positions 413 to 435 (KAESKAPAGGQNNPSSSPSGSTV) are disordered. Over residues 419-435 (PAGGQNNPSSSPSGSTV) the composition is skewed to low complexity. The region spanning 438–497 (ASKHLCKALYTFQARQDDELNLEKGDIVTVHEKKEEGWWFGSLKGKRGHFPAAYVEELPP) is the SH3 domain. Serine 479 carries the post-translational modification Phosphoserine.

Homotrimer. Interacts with NOS3, DNM2, WASL and CAV1. Interacts with DAB2. Interacts (via SH3 domain) with DNM2; this interaction allows the recruitment of NOS3 to dynamin-positive structures.

The protein localises to the cell membrane. The protein resides in the cytoplasmic vesicle. Its subcellular location is the cytoplasm. It localises to the cytoskeleton. It is found in the nucleus. Its function is as follows. Multivalent adapter protein which may decrease NOS3 activity by inducing its translocation away from the plasma membrane. The sequence is that of Nostrin from Mus musculus (Mouse).